A 306-amino-acid polypeptide reads, in one-letter code: MWFKNLLTYRLTQDVPFEPEALEAALASKPARPCASQELTTYGFVAPFGKGADAPLVHVSGEFLLIAARKEERILPSSVVNDAVKEKVEEIETEQMRKVYKKERDQIKDEIIQAFLPRAFIRRSMIFAAIAPRLGLILVNSASAKRAEDLLSTLREVMGSLPVRPVTVKIAPAATMTDWVKSQHAAEGFYVLDECELRDTGEDGGIVRCKRQDLTGEEIQLHLSTGKVVTQLALAWQDKLSFVLDDKTVIKRLKFEELLQEQAEQDGGDEAQQQFDASFTLMMMTFTEFLPALFEALGGEEIPQGV.

It belongs to the RdgC family.

Its subcellular location is the cytoplasm. It is found in the nucleoid. Functionally, may be involved in recombination. The chain is Recombination-associated protein RdgC from Pseudomonas entomophila (strain L48).